Reading from the N-terminus, the 128-residue chain is Large ribosomal subunit protein bL17 (128 aa).

It belongs to the bacterial ribosomal protein bL17 family. Part of the 50S ribosomal subunit. Contacts protein L32.

This Pseudomonas savastanoi pv. phaseolicola (strain 1448A / Race 6) (Pseudomonas syringae pv. phaseolicola (strain 1448A / Race 6)) protein is Large ribosomal subunit protein bL17.